The sequence spans 277 residues: Undecaprenyl-diphosphatase (277 aa).

A run of 6 helical transmembrane segments spans residues 47–67 (FNII…RGKI), 85–105 (ANLL…ADLI), 108–128 (WLFN…VMLW), 187–207 (FSFF…GYVY), 218–238 (VFAV…RALL), and 249–269 (FAWY…FHLI).

Belongs to the UppP family.

The protein localises to the cell inner membrane. The catalysed reaction is di-trans,octa-cis-undecaprenyl diphosphate + H2O = di-trans,octa-cis-undecaprenyl phosphate + phosphate + H(+). Functionally, catalyzes the dephosphorylation of undecaprenyl diphosphate (UPP). Confers resistance to bacitracin. The protein is Undecaprenyl-diphosphatase of Pseudomonas aeruginosa (strain ATCC 15692 / DSM 22644 / CIP 104116 / JCM 14847 / LMG 12228 / 1C / PRS 101 / PAO1).